Consider the following 236-residue polypeptide: 2-C-methyl-D-erythritol 4-phosphate cytidylyltransferase (236 aa).

Belongs to the IspD/TarI cytidylyltransferase family. IspD subfamily.

The enzyme catalyses 2-C-methyl-D-erythritol 4-phosphate + CTP + H(+) = 4-CDP-2-C-methyl-D-erythritol + diphosphate. It functions in the pathway isoprenoid biosynthesis; isopentenyl diphosphate biosynthesis via DXP pathway; isopentenyl diphosphate from 1-deoxy-D-xylulose 5-phosphate: step 2/6. Functionally, catalyzes the formation of 4-diphosphocytidyl-2-C-methyl-D-erythritol from CTP and 2-C-methyl-D-erythritol 4-phosphate (MEP). This chain is 2-C-methyl-D-erythritol 4-phosphate cytidylyltransferase, found in Burkholderia orbicola (strain AU 1054).